The chain runs to 542 residues: Berberine bridge enzyme-like 25 (542 aa).

A signal peptide spans 1-30 (MGNSKPLPTISCISVFALYFSFYTITLTSS). Cysteines 40 and 104 form a disulfide. Asn61 carries N-linked (GlcNAc...) asparagine glycosylation. Residues 82–258 (TMPKPGFIFK…LSWKIKLVPV (177 aa)) enclose the FAD-binding PCMH-type domain. His119 is subject to Pros-8alpha-FAD histidine. N-linked (GlcNAc...) asparagine glycans are attached at residues Asn308 and Asn436.

This sequence belongs to the oxygen-dependent FAD-linked oxidoreductase family. Requires FAD as cofactor.

It localises to the secreted. Its subcellular location is the cell wall. This is Berberine bridge enzyme-like 25 from Arabidopsis thaliana (Mouse-ear cress).